The chain runs to 336 residues: Phosphoribosylformylglycinamidine cyclo-ligase (336 aa).

It belongs to the AIR synthase family.

Its subcellular location is the cytoplasm. It carries out the reaction 2-formamido-N(1)-(5-O-phospho-beta-D-ribosyl)acetamidine + ATP = 5-amino-1-(5-phospho-beta-D-ribosyl)imidazole + ADP + phosphate + H(+). The protein operates within purine metabolism; IMP biosynthesis via de novo pathway; 5-amino-1-(5-phospho-D-ribosyl)imidazole from N(2)-formyl-N(1)-(5-phospho-D-ribosyl)glycinamide: step 2/2. The protein is Phosphoribosylformylglycinamidine cyclo-ligase of Thermoanaerobacter pseudethanolicus (strain ATCC 33223 / 39E) (Clostridium thermohydrosulfuricum).